The sequence spans 231 residues: uncharacterized protein (231 aa).

10 to 34 is a binding site for NADP(+); that stretch reads IITGASSGIGAATAKALEKQGVKVV. Residue Ser-140 participates in substrate binding. Tyr-153 functions as the Proton acceptor in the catalytic mechanism.

Belongs to the short-chain dehydrogenases/reductases (SDR) family.

This is an uncharacterized protein from Staphylococcus haemolyticus (strain JCSC1435).